The chain runs to 116 residues: uncharacterized protein (116 aa).

The RRM domain maps to 6-83 (ATVHVGNLAP…RCIRVSPANF (78 aa)).

The protein resides in the cytoplasm. Its subcellular location is the nucleus. This is an uncharacterized protein from Schizosaccharomyces pombe (strain 972 / ATCC 24843) (Fission yeast).